The sequence spans 356 residues: Nitrilase, arylacetone-specific (356 aa).

The 274-residue stretch at 7-280 (VRAAAVQAAS…EGLIIADLNM (274 aa)) folds into the CN hydrolase domain. The active-site Proton acceptor is glutamate 47. Lysine 129 functions as the Proton donor in the catalytic mechanism. The active-site Nucleophile is cysteine 163. Residues 324–356 (QEEAPEPHVQSTAAPVAVSQTQDSDTLLVQEPS) are disordered. Residues 332 to 356 (VQSTAAPVAVSQTQDSDTLLVQEPS) are compositionally biased toward polar residues.

The protein belongs to the carbon-nitrogen hydrolase superfamily. Nitrilase family. In terms of assembly, homohexamer.

The catalysed reaction is a nitrile + 2 H2O = a carboxylate + NH4(+). In terms of biological role, nitrilase that acts mostly on arylacetonitriles. This chain is Nitrilase, arylacetone-specific, found in Alcaligenes faecalis.